A 182-amino-acid chain; its full sequence is PRKR-interacting protein 1 homolog (182 aa).

Basic and acidic residues-rich tracts occupy residues 1 to 18 (MAVE…KKES), 27 to 43 (PAEE…RNPD), and 114 to 124 (IENQKAAEDRT). Disordered regions lie at residues 1 to 80 (MAVE…GEFH) and 114 to 182 (IENQ…MGKR). Positions 51–143 (KPKEWNPRAP…LKQKKLMAKK (93 aa)) are required for RNA-binding. Residues 99–157 (LSEKQKLDEEYKEKLIENQKAAEDRTAKRRKKREKLKQKKLMAKKAKMESQKEEDSEKS) adopt a coiled-coil conformation. The segment covering 125–143 (AKRRKKREKLKQKKLMAKK) has biased composition (basic residues). The segment at 126–138 (KRRKKREKLKQKK) is required for nuclear localization. A compositionally biased stretch (basic and acidic residues) spans 144–156 (AKMESQKEEDSEK). A compositionally biased stretch (acidic residues) spans 164–173 (EGEEKDDDAE).

Belongs to the PRKRIP1 family. In terms of assembly, component of the pre-catalytic and post-catalytic spliceosome complexes.

It localises to the nucleus. It is found in the nucleolus. In terms of biological role, required for pre-mRNA splicing as component of the spliceosome. Binds double-stranded RNA. The polypeptide is PRKR-interacting protein 1 homolog (prkrip1) (Danio rerio (Zebrafish)).